A 107-amino-acid polypeptide reads, in one-letter code: Large ribosomal subunit protein uL24 (107 aa).

Belongs to the universal ribosomal protein uL24 family. In terms of assembly, part of the 50S ribosomal subunit.

One of two assembly initiator proteins, it binds directly to the 5'-end of the 23S rRNA, where it nucleates assembly of the 50S subunit. Its function is as follows. One of the proteins that surrounds the polypeptide exit tunnel on the outside of the subunit. The protein is Large ribosomal subunit protein uL24 of Caldanaerobacter subterraneus subsp. tengcongensis (strain DSM 15242 / JCM 11007 / NBRC 100824 / MB4) (Thermoanaerobacter tengcongensis).